The chain runs to 80 residues: Translation initiation factor IF-1, chloroplastic (80 aa).

In terms of domain architecture, S1-like spans 1–72 (MKEHDLINME…TKGRILYRIR (72 aa)).

The protein belongs to the IF-1 family. In terms of assembly, component of the 30S ribosomal translation pre-initiation complex which assembles on the 30S ribosome in the order IF-2 and IF-3, IF-1 and N-formylmethionyl-tRNA(fMet); mRNA recruitment can occur at any time during PIC assembly.

Its subcellular location is the plastid. It is found in the chloroplast. In terms of biological role, one of the essential components for the initiation of protein synthesis. Stabilizes the binding of IF-2 and IF-3 on the 30S subunit to which N-formylmethionyl-tRNA(fMet) subsequently binds. Helps modulate mRNA selection, yielding the 30S pre-initiation complex (PIC). Upon addition of the 50S ribosomal subunit IF-1, IF-2 and IF-3 are released leaving the mature 70S translation initiation complex. This is Translation initiation factor IF-1, chloroplastic from Psilotum nudum (Whisk fern).